The primary structure comprises 282 residues: MRPKANQNHKLKVLLVFLLATLILIFIVRSTLTSSQEHQTPQETRSTRCSGACNKLPRSLAQALIHYSTSVITPQQTLKEIAVSSRVLGKKSPCNFLVFGLGHDSLMWSSLNYGGRTVFLEEDEAWIKQIKRRFPMLESYHVTYDSKVNQADNLIEVGKGPECTAIGDPRYSMCQLALKGLPAEIYETGWDLIMVDAPTGYYDEAPGRMTAIYTAGMMARNRKQGGETDVFVHDVNREIEDKFSKAFLCEGYMKKQEGRLRHFIIPSYRDGSESESNRPFCP.

Residues 13-33 (VLLVFLLATLILIFIVRSTLT) traverse the membrane as a helical segment.

The protein belongs to the methyltransferase superfamily. As to expression, expressed in rosette leaves, stems, flowers and siliques.

Its subcellular location is the golgi apparatus membrane. The catalysed reaction is glucuronoxylan D-glucuronate + n S-adenosyl-L-methionine = glucuronoxylan 4-O-methyl-D-glucuronate + n S-adenosyl-L-homocysteine + n H(+). Its function is as follows. Methyltransferase catalyzing 4-O-methylation of glucuronic acid side chains on xylan. The polypeptide is Glucuronoxylan 4-O-methyltransferase 1 (GXM1) (Arabidopsis thaliana (Mouse-ear cress)).